We begin with the raw amino-acid sequence, 318 residues long: Aspartate carbamoyltransferase catalytic subunit (318 aa).

2 residues coordinate carbamoyl phosphate: Arg-55 and Thr-56. Lys-83 lines the L-aspartate pocket. Residues Arg-105, His-138, and Gln-141 each coordinate carbamoyl phosphate. Arg-171 and Arg-225 together coordinate L-aspartate. Carbamoyl phosphate-binding residues include Gly-266 and Pro-267.

This sequence belongs to the aspartate/ornithine carbamoyltransferase superfamily. ATCase family. Heterododecamer (2C3:3R2) of six catalytic PyrB chains organized as two trimers (C3), and six regulatory PyrI chains organized as three dimers (R2).

The catalysed reaction is carbamoyl phosphate + L-aspartate = N-carbamoyl-L-aspartate + phosphate + H(+). It functions in the pathway pyrimidine metabolism; UMP biosynthesis via de novo pathway; (S)-dihydroorotate from bicarbonate: step 2/3. Functionally, catalyzes the condensation of carbamoyl phosphate and aspartate to form carbamoyl aspartate and inorganic phosphate, the committed step in the de novo pyrimidine nucleotide biosynthesis pathway. In Corynebacterium kroppenstedtii (strain DSM 44385 / JCM 11950 / CIP 105744 / CCUG 35717), this protein is Aspartate carbamoyltransferase catalytic subunit.